Here is a 206-residue protein sequence, read N- to C-terminus: Large ribosomal subunit protein uL3 (206 aa).

The disordered stretch occupies residues serine 127–alanine 151.

The protein belongs to the universal ribosomal protein uL3 family. As to quaternary structure, part of the 50S ribosomal subunit. Forms a cluster with proteins L14 and L19.

Functionally, one of the primary rRNA binding proteins, it binds directly near the 3'-end of the 23S rRNA, where it nucleates assembly of the 50S subunit. The sequence is that of Large ribosomal subunit protein uL3 from Borreliella burgdorferi (strain ATCC 35210 / DSM 4680 / CIP 102532 / B31) (Borrelia burgdorferi).